Reading from the N-terminus, the 548-residue chain is Chaperonin GroEL (548 aa).

ATP contacts are provided by residues 30–33 (TLGP), Lys51, 87–91 (DGTTT), Gly415, and Asp496. The interval 527–548 (SDKEDAMPPMRGGMGGMGGMDF) is disordered. Residues 538–548 (GGMGGMGGMDF) show a composition bias toward gly residues.

Belongs to the chaperonin (HSP60) family. Forms a cylinder of 14 subunits composed of two heptameric rings stacked back-to-back. Interacts with the co-chaperonin GroES.

The protein resides in the cytoplasm. The enzyme catalyses ATP + H2O + a folded polypeptide = ADP + phosphate + an unfolded polypeptide.. Together with its co-chaperonin GroES, plays an essential role in assisting protein folding. The GroEL-GroES system forms a nano-cage that allows encapsulation of the non-native substrate proteins and provides a physical environment optimized to promote and accelerate protein folding. This chain is Chaperonin GroEL, found in Rickettsia akari (strain Hartford).